Reading from the N-terminus, the 1140-residue chain is Protein shank (1140 aa).

6 ANK repeats span residues 144 to 174, 178 to 207, 211 to 242, 246 to 275, 279 to 309, and 312 to 341; these read QGET…HVDF, EGQT…SPNY, IGLT…DIGV, HGNH…QIDA, NGNS…HLAV, and QGQT…KSSV. Positions 337 to 412 are disordered; that stretch reads PKSSVPYRGT…ITPSEYGTMR (76 aa). Residues 351 to 364 show a composition bias toward basic residues; the sequence is TRRRLSSTITRRRS. The segment covering 388–412 has biased composition (low complexity); sequence SAAPSPSPSRSSRTTITPSEYGTMR. Positions 436–529 constitute a PDZ domain; sequence ILVIPRGVKG…TITLKVITVD (94 aa). 2 stretches are compositionally biased toward polar residues: residues 640-657 and 687-704; these read DQES…NSVS and TSTF…QLSR. Disordered stretches follow at residues 640–673, 687–856, 875–902, 961–993, and 1008–1028; these read DQES…ASSA, TSTF…AASA, QLKK…STTD, KDSG…HSPN, and YGQK…SSTV. Composition is skewed to low complexity over residues 761–775 and 784–793; these read QHQN…QQHP and PQPIQQQQSS. Composition is skewed to pro residues over residues 794-806 and 823-847; these read IPPP…PPHC and VPPP…PPPG. Positions 964-974 are enriched in polar residues; it reads GYTSSRTSLEP. A compositionally biased stretch (basic and acidic residues) spans 977-988; it reads SEEKDHRPHFSL. Over residues 1015–1028 the composition is skewed to low complexity; it reads SVASSSTASSSSTV. The region spanning 1078-1140 is the SAM domain; it reads WSVDDVIGWL…IESALRGLLQ (63 aa).

Belongs to the SHANK family. In terms of assembly, interacts (via PDZ domain) with egl-19 (via C-terminus). Expressed in the pharynx, pharyngeal-intestinal valve, intestine, rectal epithelial cells, tail neurons, nerve cord and sperm.

It is found in the cell projection. The protein resides in the pseudopodium. It localises to the cytoplasmic vesicle. Its subcellular location is the postsynaptic density. Functionally, scaffold protein that most likely acts in the postsynaptic density (PSD) of excitatory synapses which orchestrates synapse formation and maintenance at neuromuscular junctions. Associates with and trafficks the L-type calcium channel egl-19 to the cell surface of body wall muscles to ensure the function of the calcium channel and therefore maintain the Ca(2+) current density. The maintenance of Ca(2+) also allows for the downstream regulation of Ca(2+)-induced expression of genes such as gem-4. Plays a role in the regulation of the defecation cycle, and this may be in association with the inositol trisphosphate (IP3) receptor itr-1, which in turn mediates periodic calcium release and muscle contractions. Required for normal fertility and pharyngeal pumping. This is Protein shank from Caenorhabditis elegans.